The following is a 124-amino-acid chain: MDVSRVNVKRAPCALCTTKNKRCPKKCDFAPYFPAERKGEYENAHKLFGTSNIIKMMRFASKDKQRDMLASSILMEGDAWKKDPARGGFGMIQKLKWQIELRKIYLNELKEKIKVEKEKTELRL.

The LOB domain maps to 11-113 (APCALCTTKN…IYLNELKEKI (103 aa)).

Belongs to the LOB domain-containing protein family.

This Arabidopsis thaliana (Mouse-ear cress) protein is LOB domain-containing protein 9 (LBD9).